A 268-amino-acid polypeptide reads, in one-letter code: MGQKINPHGFRLGITTDWKSRWYADKQYAEYVKEDVAIRKLLATGMERAGIAKVEIERTRDRVRVDIHTARPGIVIGRRGAEADRIRSELEKLTGKQVQLNILEVKNAEAEAQLVAQGVAEQLSNRVAFRRAMRKAIQSAMRQPNVKGIRVQCSGRLGGAEMSRSEFYREGRVPLHTLRADIDYGLYEAKTTFGRIGVKVWIYKGDIVGGKRELAANTAAPAGDRPRRERPSRPRRSGATGTTATSTEAGRAATATADAPATEQNQEG.

Residues 38–106 enclose the KH type-2 domain; sequence IRKLLATGME…QVQLNILEVK (69 aa). Residues 217–268 form a disordered region; sequence NTAAPAGDRPRRERPSRPRRSGATGTTATSTEAGRAATATADAPATEQNQEG. Positions 237–268 are enriched in low complexity; that stretch reads SGATGTTATSTEAGRAATATADAPATEQNQEG.

It belongs to the universal ribosomal protein uS3 family. Part of the 30S ribosomal subunit. Forms a tight complex with proteins S10 and S14.

Binds the lower part of the 30S subunit head. Binds mRNA in the 70S ribosome, positioning it for translation. The sequence is that of Small ribosomal subunit protein uS3 from Rhodococcus erythropolis (strain PR4 / NBRC 100887).